We begin with the raw amino-acid sequence, 451 residues long: Probable glycine dehydrogenase (decarboxylating) subunit 1 (451 aa).

Belongs to the GcvP family. N-terminal subunit subfamily. In terms of assembly, the glycine cleavage system is composed of four proteins: P, T, L and H. In this organism, the P 'protein' is a heterodimer of two subunits.

The catalysed reaction is N(6)-[(R)-lipoyl]-L-lysyl-[glycine-cleavage complex H protein] + glycine + H(+) = N(6)-[(R)-S(8)-aminomethyldihydrolipoyl]-L-lysyl-[glycine-cleavage complex H protein] + CO2. Functionally, the glycine cleavage system catalyzes the degradation of glycine. The P protein binds the alpha-amino group of glycine through its pyridoxal phosphate cofactor; CO(2) is released and the remaining methylamine moiety is then transferred to the lipoamide cofactor of the H protein. The chain is Probable glycine dehydrogenase (decarboxylating) subunit 1 from Thermococcus kodakarensis (strain ATCC BAA-918 / JCM 12380 / KOD1) (Pyrococcus kodakaraensis (strain KOD1)).